Here is a 93-residue protein sequence, read N- to C-terminus: uncharacterized protein (93 aa).

This is an uncharacterized protein from Saimiriine herpesvirus 2 (strain 11) (SaHV-2).